Here is a 545-residue protein sequence, read N- to C-terminus: Membrane protein insertase YidC (545 aa).

Residues 6-26 traverse the membrane as a helical segment; that stretch reads FVLFVFFIFLSFLLWEQWQID. Residues 32–69 form a disordered region; sequence QAVAQTDGASRPAGDLPQRPSDDESDVTVHTEAPTQEG. Transmembrane regions (helical) follow at residues 354 to 374, 425 to 445, 462 to 482, and 500 to 520; these read FFNN…ALFF, GGCL…WVLV, LSSK…MFIQ, and FFPL…VLYW.

This sequence belongs to the OXA1/ALB3/YidC family. Type 1 subfamily. In terms of assembly, interacts with the Sec translocase complex via SecD. Specifically interacts with transmembrane segments of nascent integral membrane proteins during membrane integration.

Its subcellular location is the cell inner membrane. In terms of biological role, required for the insertion and/or proper folding and/or complex formation of integral membrane proteins into the membrane. Involved in integration of membrane proteins that insert both dependently and independently of the Sec translocase complex, as well as at least some lipoproteins. Aids folding of multispanning membrane proteins. In Methylococcus capsulatus (strain ATCC 33009 / NCIMB 11132 / Bath), this protein is Membrane protein insertase YidC.